Here is a 283-residue protein sequence, read N- to C-terminus: Thymidylate synthase (283 aa).

A dUMP-binding site is contributed by Arg22. The active-site Nucleophile is Cys160. DUMP-binding positions include 180–183 (RSCD), Asn191, and 221–223 (HIY). Residue Asp183 participates in (6R)-5,10-methylene-5,6,7,8-tetrahydrofolate binding. Ser282 lines the (6R)-5,10-methylene-5,6,7,8-tetrahydrofolate pocket.

This sequence belongs to the thymidylate synthase family. Bacterial-type ThyA subfamily. Homodimer.

Its subcellular location is the cytoplasm. The catalysed reaction is dUMP + (6R)-5,10-methylene-5,6,7,8-tetrahydrofolate = 7,8-dihydrofolate + dTMP. It participates in pyrimidine metabolism; dTTP biosynthesis. Functionally, catalyzes the reductive methylation of 2'-deoxyuridine-5'-monophosphate (dUMP) to 2'-deoxythymidine-5'-monophosphate (dTMP) while utilizing 5,10-methylenetetrahydrofolate (mTHF) as the methyl donor and reductant in the reaction, yielding dihydrofolate (DHF) as a by-product. This enzymatic reaction provides an intracellular de novo source of dTMP, an essential precursor for DNA biosynthesis. This is Thymidylate synthase from Pseudoalteromonas translucida (strain TAC 125).